The primary structure comprises 102 residues: Small ribosomal subunit protein uS10 (102 aa).

Belongs to the universal ribosomal protein uS10 family. In terms of assembly, part of the 30S ribosomal subunit.

Involved in the binding of tRNA to the ribosomes. This is Small ribosomal subunit protein uS10 from Thermococcus kodakarensis (strain ATCC BAA-918 / JCM 12380 / KOD1) (Pyrococcus kodakaraensis (strain KOD1)).